We begin with the raw amino-acid sequence, 348 residues long: Ion-translocating oxidoreductase complex subunit D (348 aa).

Helical transmembrane passes span 19 to 39, 41 to 61, 66 to 86, 87 to 107, and 122 to 142; these read FMLWVIVAMLPALIVQIAFFG, GVVIQLAIALSMAIVIEIVVA, KSTTFYLADLAGVVTATILAM, AIPPYAPYWVVMIGMIVALLL, and PAMVAYAFLLISFPVQMTSWL. Residue threonine 186 is modified to FMN phosphoryl threonine. 5 helical membrane-spanning segments follow: residues 212–232, 236–256, 265–285, 291–311, and 315–335; these read IFARGWLQLNLAFLAGGLFLL, IIHWQIPVAMLVVFSVLSALT, LNVLSQLFSGAMMFGAFFIAT, SITPKGKLIFGGLIGLLAYLI, and GSYPDAIAFAVLLANLCVPLI.

It belongs to the NqrB/RnfD family. In terms of assembly, the complex is composed of six subunits: RnfA, RnfB, RnfC, RnfD, RnfE and RnfG. FMN is required as a cofactor.

It localises to the cell inner membrane. Its function is as follows. Part of a membrane-bound complex that couples electron transfer with translocation of ions across the membrane. This Haemophilus ducreyi (strain 35000HP / ATCC 700724) protein is Ion-translocating oxidoreductase complex subunit D.